The following is a 505-amino-acid chain: tRNA-2-methylthio-N(6)-dimethylallyladenosine synthase (505 aa).

The 119-residue stretch at arginine 14 to valine 132 folds into the MTTase N-terminal domain. Positions 23, 61, 95, 169, 173, and 176 each coordinate [4Fe-4S] cluster. Residues arginine 155–glutamate 386 enclose the Radical SAM core domain. Residues lysine 388–valine 456 enclose the TRAM domain.

It belongs to the methylthiotransferase family. MiaB subfamily. As to quaternary structure, monomer. Requires [4Fe-4S] cluster as cofactor.

The protein resides in the cytoplasm. It carries out the reaction N(6)-dimethylallyladenosine(37) in tRNA + (sulfur carrier)-SH + AH2 + 2 S-adenosyl-L-methionine = 2-methylsulfanyl-N(6)-dimethylallyladenosine(37) in tRNA + (sulfur carrier)-H + 5'-deoxyadenosine + L-methionine + A + S-adenosyl-L-homocysteine + 2 H(+). Catalyzes the methylthiolation of N6-(dimethylallyl)adenosine (i(6)A), leading to the formation of 2-methylthio-N6-(dimethylallyl)adenosine (ms(2)i(6)A) at position 37 in tRNAs that read codons beginning with uridine. This Streptomyces coelicolor (strain ATCC BAA-471 / A3(2) / M145) protein is tRNA-2-methylthio-N(6)-dimethylallyladenosine synthase.